Reading from the N-terminus, the 102-residue chain is Large ribosomal subunit protein bL21 (102 aa).

Belongs to the bacterial ribosomal protein bL21 family. As to quaternary structure, part of the 50S ribosomal subunit. Contacts protein L20.

This protein binds to 23S rRNA in the presence of protein L20. This is Large ribosomal subunit protein bL21 from Enterococcus faecalis (strain ATCC 700802 / V583).